The sequence spans 792 residues: Endonuclease MutS2 (792 aa).

Position 335 to 342 (335 to 342) interacts with ATP; that stretch reads GPNTGGKT. The 76-residue stretch at 717–792 folds into the Smr domain; that stretch reads VDLRGLNLEE…GAGVTIVKLK (76 aa).

It belongs to the DNA mismatch repair MutS family. MutS2 subfamily. Homodimer. Binds to stalled ribosomes, contacting rRNA.

In terms of biological role, endonuclease that is involved in the suppression of homologous recombination and thus may have a key role in the control of bacterial genetic diversity. Its function is as follows. Acts as a ribosome collision sensor, splitting the ribosome into its 2 subunits. Detects stalled/collided 70S ribosomes which it binds and splits by an ATP-hydrolysis driven conformational change. Acts upstream of the ribosome quality control system (RQC), a ribosome-associated complex that mediates the extraction of incompletely synthesized nascent chains from stalled ribosomes and their subsequent degradation. Probably generates substrates for RQC. In Clostridioides difficile (strain 630) (Peptoclostridium difficile), this protein is Endonuclease MutS2.